A 162-amino-acid polypeptide reads, in one-letter code: Zinc finger protein 593 homolog (162 aa).

The C2H2-type zinc-finger motif lies at 59–83 (FYCVHCAKYFIDDTAMQAHFRTKVH). A disordered region spans residues 110–162 (VKPKKRAMETQPSKEDVVAGKRIRVEVVPEDTDATDSPSTSKTKRKKVEKMET). Residues 115–136 (RAMETQPSKEDVVAGKRIRVEV) show a composition bias toward basic and acidic residues. A compositionally biased stretch (basic residues) spans 151 to 162 (KTKRKKVEKMET).

It belongs to the ZNF593/BUD20 C2H2-type zinc-finger protein family. As to quaternary structure, associates with pre-60S ribosomal particles; released from the pre-60S particle very early in the cytoplasm.

The protein localises to the nucleus. It is found in the cytoplasm. In terms of biological role, involved in pre-60S ribosomal particles maturation by promoting the nuclear export of the 60S ribosome. The sequence is that of Zinc finger protein 593 homolog from Drosophila melanogaster (Fruit fly).